The chain runs to 155 residues: Putative pre-16S rRNA nuclease (155 aa).

Belongs to the YqgF nuclease family.

It localises to the cytoplasm. Its function is as follows. Could be a nuclease involved in processing of the 5'-end of pre-16S rRNA. The protein is Putative pre-16S rRNA nuclease of Wolbachia sp. subsp. Brugia malayi (strain TRS).